We begin with the raw amino-acid sequence, 112 residues long: Large ribosomal subunit protein eL30 (112 aa).

The protein belongs to the eukaryotic ribosomal protein eL30 family.

This chain is Large ribosomal subunit protein eL30 (rpl30), found in Dictyostelium discoideum (Social amoeba).